Here is an 809-residue protein sequence, read N- to C-terminus: Interleukin-4 receptor subunit alpha (809 aa).

The signal sequence occupies residues 1–25 (MGCLCPGLTLPVSCLILVWAAGSGS). The Extracellular segment spans residues 26 to 231 (VKVLRLTACF…NYYEQPLEQR (206 aa)). A disulfide bridge links C34 with C44. N-linked (GlcNAc...) asparagine glycosylation is found at N53 and N71. C74 and C86 are oxidised to a cystine. N-linked (GlcNAc...) asparagine glycans are attached at residues N112, N128, and N161. Residues 125–222 (APQNLTVHAI…EWSPSTTWHN (98 aa)) form the Fibronectin type-III domain. S163 bears the Phosphoserine mark. N-linked (GlcNAc...) asparagine glycosylation is found at N175 and N208. The short motif at 211–215 (WSEWS) is the WSXWS motif element. Residues 232-255 (LPLGVSISCVVILAICLSCYFSII) traverse the membrane as a helical segment. Residues 256–809 (KIKKEWWDQI…STGPTCTSAS (554 aa)) lie on the Cytoplasmic side of the membrane. The Box 1 motif motif lies at 261-269 (WWDQIPNPA). Disordered regions lie at residues 369–397 (ESEEEEVEEDRGSFCPSPESSGSGFQEGR) and 441–468 (SAGPQEAASQGEEQPLNPESNPLATLTQ). Polar residues predominate over residues 447-468 (AASQGEEQPLNPESNPLATLTQ). Position 488 is a phosphotyrosine (Y488). The disordered stretch occupies residues 514–536 (LGQVDPSIPSAPQPSEPPTALQP). Residues Y566, Y590, and Y618 each carry the phosphotyrosine modification. A disordered region spans residues 606 to 674 (QSGVEASSGE…EPTVKGEDPR (69 aa)). The ITIM motif motif lies at 695 to 700 (IVYSAL).

This sequence belongs to the type I cytokine receptor family. Type 4 subfamily. As to quaternary structure, the functional IL4 receptor is formed by initial binding of IL4 to IL4R. Subsequent recruitment to the complex of the common gamma chain, in immune cells, creates a type I receptor and, in non-immune cells, of IL13RA1 forms a type II receptor. IL4R can also interact with the IL13/IL13RA1 complex to form a similar type II receptor. Interacts with PIK3C3. Interacts with the SH2-containing phosphatases, PTPN6/SHIP1, PTPN11/SHIP2 and INPP5D/SHIP. Interacts with JAK1 through a Box 1-containing region; inhibited by SOCS5. Interacts with SOCS5; inhibits IL4 signaling. Interacts with JAK3. Interacts with CLM1. Interacts with IL13RA2. Post-translationally, on IL4 binding, phosphorylated on tyrosine residues in the cytoplasmic domain.

It localises to the cell membrane. The protein resides in the secreted. Functionally, receptor for both interleukin 4 and interleukin 13. Couples to the JAK1/2/3-STAT6 pathway. The IL4 response is involved in promoting Th2 differentiation. The IL4/IL13 responses are involved in regulating IgE production and, chemokine and mucus production at sites of allergic inflammation. In certain cell types, can signal through activation of insulin receptor substrates, IRS1/IRS2. In Equus caballus (Horse), this protein is Interleukin-4 receptor subunit alpha (IL4R).